We begin with the raw amino-acid sequence, 103 residues long: Small ribosomal subunit protein uS10 (103 aa).

This sequence belongs to the universal ribosomal protein uS10 family. Part of the 30S ribosomal subunit.

Functionally, involved in the binding of tRNA to the ribosomes. The protein is Small ribosomal subunit protein uS10 of Campylobacter hominis (strain ATCC BAA-381 / DSM 21671 / CCUG 45161 / LMG 19568 / NCTC 13146 / CH001A).